Consider the following 101-residue polypeptide: MDIMQTAVAGSLESSDIMITVNPATDGITIDLESSVEKQFGRRIRQVIEETLKHLGVNGVLVQAVDKGALDCTIQARTIAAVHRAAGLDQYNWKEIDSWNV.

An O-(phosphoribosyl dephospho-coenzyme A)serine modification is found at Ser14.

The protein belongs to the CitD family. As to quaternary structure, oligomer with a subunit composition of (alpha,beta,gamma)6.

It localises to the cytoplasm. Covalent carrier of the coenzyme of citrate lyase. This is Citrate lyase acyl carrier protein from Streptococcus uberis (strain ATCC BAA-854 / 0140J).